A 129-amino-acid chain; its full sequence is Dynein 14 kDa light chain, flagellar outer arm (129 aa).

The Thioredoxin domain occupies Ala-2 to Gly-109. The cysteines at positions 34 and 37 are disulfide-linked. The interval Leu-107–Ser-129 is disordered. Over residues Pro-117–Ser-129 the composition is skewed to low complexity.

In terms of assembly, consists of at least 3 heavy chains (alpha, beta and gamma), 2 intermediate chains and 8 light chains.

Its subcellular location is the cell projection. It localises to the cilium. The protein localises to the flagellum. The protein resides in the cytoplasm. It is found in the cytoskeleton. Its subcellular location is the flagellum axoneme. In terms of biological role, may be involved in regulating the redox state of functionally important thiol groups within dynein. This chain is Dynein 14 kDa light chain, flagellar outer arm, found in Chlamydomonas reinhardtii (Chlamydomonas smithii).